Consider the following 205-residue polypeptide: dTTP/UTP pyrophosphatase (205 aa).

The active-site Proton acceptor is D81.

Belongs to the Maf family. YhdE subfamily. A divalent metal cation is required as a cofactor.

Its subcellular location is the cytoplasm. It catalyses the reaction dTTP + H2O = dTMP + diphosphate + H(+). It carries out the reaction UTP + H2O = UMP + diphosphate + H(+). Functionally, nucleoside triphosphate pyrophosphatase that hydrolyzes dTTP and UTP. May have a dual role in cell division arrest and in preventing the incorporation of modified nucleotides into cellular nucleic acids. The polypeptide is dTTP/UTP pyrophosphatase (Agathobacter rectalis (strain ATCC 33656 / DSM 3377 / JCM 17463 / KCTC 5835 / VPI 0990) (Eubacterium rectale)).